We begin with the raw amino-acid sequence, 57 residues long: Protein translocase subunit SecE (57 aa).

A helical membrane pass occupies residues 33-53 (GLGILLVGFIGFVIFSIMTFV).

Belongs to the SecE/SEC61-gamma family. Component of the Sec protein translocase complex. Heterotrimer consisting of SecY (alpha), SecG (beta) and SecE (gamma) subunits. The heterotrimers can form oligomers, although 1 heterotrimer is thought to be able to translocate proteins. Interacts with the ribosome. May interact with SecDF, and other proteins may be involved.

It is found in the cell membrane. Essential subunit of the Sec protein translocation channel SecYEG. Clamps together the 2 halves of SecY. May contact the channel plug during translocation. In Natronomonas pharaonis (strain ATCC 35678 / DSM 2160 / CIP 103997 / JCM 8858 / NBRC 14720 / NCIMB 2260 / Gabara) (Halobacterium pharaonis), this protein is Protein translocase subunit SecE.